Consider the following 361-residue polypeptide: Phosphate acyltransferase (361 aa).

Belongs to the PlsX family. Homodimer. Probably interacts with PlsY.

The protein localises to the cytoplasm. It catalyses the reaction a fatty acyl-[ACP] + phosphate = an acyl phosphate + holo-[ACP]. The protein operates within lipid metabolism; phospholipid metabolism. Its function is as follows. Catalyzes the reversible formation of acyl-phosphate (acyl-PO(4)) from acyl-[acyl-carrier-protein] (acyl-ACP). This enzyme utilizes acyl-ACP as fatty acyl donor, but not acyl-CoA. This is Phosphate acyltransferase from Parvibaculum lavamentivorans (strain DS-1 / DSM 13023 / NCIMB 13966).